The sequence spans 146 residues: Hut operon positive regulatory protein (146 aa).

The protein belongs to the HutP family. As to quaternary structure, homohexamer.

In terms of biological role, antiterminator that binds to cis-acting regulatory sequences on the mRNA in the presence of histidine, thereby suppressing transcription termination and activating the hut operon for histidine utilization. This is Hut operon positive regulatory protein from Bacillus mycoides (strain KBAB4) (Bacillus weihenstephanensis).